Here is a 481-residue protein sequence, read N- to C-terminus: uncharacterized protein (481 aa).

11 consecutive transmembrane segments (helical) span residues 14-34 (LGFC…GIFL), 46-66 (FAPM…IVFA), 90-110 (IGIY…GVLA), 134-154 (FSVK…INLF), 167-187 (TVGK…IITT), 218-238 (FSSM…FESI), 258-278 (IAIF…MLLG), 303-323 (IIVV…SFGA), 377-397 (LAVI…IALA), 411-431 (AFTD…LAVS), and 446-466 (YFSI…AYLH).

The protein belongs to the amino acid-polyamine-organocation (APC) superfamily.

The protein resides in the cell membrane. In terms of biological role, probable amino-acid or metabolite transport protein. This is an uncharacterized protein from Mycobacterium bovis (strain ATCC BAA-935 / AF2122/97).